The chain runs to 549 residues: Antagonist of mitotic exit network protein 1 (549 aa).

A compositionally biased stretch (polar residues) spans 1-11 (MKLERVSSNGS). Residues 1 to 39 (MKLERVSSNGSFKRGRDIQSLESPCTRPLKKMSPSPSFT) are disordered.

The protein belongs to the AMN1 family. In terms of assembly, interacts with TEM1.

It localises to the cytoplasm. Its subcellular location is the nucleus. Functionally, negative regulator of the mitotic exit network (MEN), required for multiple cell cycle checkpoints. Acts in the daughter cell to inhibit the mitotic exit pathway once MEN has executed its function. Through its binding ability to TEM1, interferes with the TEM1-CDC5 association, required for CDC5 kinase activation and MEN activation. Required for daughter cell separation and chromosome stability. Involved in copper sensitivity. The chain is Antagonist of mitotic exit network protein 1 (AMN1) from Saccharomyces cerevisiae (strain ATCC 204508 / S288c) (Baker's yeast).